We begin with the raw amino-acid sequence, 373 residues long: Queuine tRNA-ribosyltransferase (373 aa).

The active-site Proton acceptor is Asp90. Substrate contacts are provided by residues 90–94 (DSGGF), Asp144, Gln193, and Gly220. Residues 251–257 (GVGTPED) are RNA binding. Residue Asp270 is the Nucleophile of the active site. The tract at residues 275–279 (TRNAR) is RNA binding; important for wobble base 34 recognition. Residues Cys308, Cys310, Cys313, and His339 each contribute to the Zn(2+) site.

The protein belongs to the queuine tRNA-ribosyltransferase family. Homodimer. Within each dimer, one monomer is responsible for RNA recognition and catalysis, while the other monomer binds to the replacement base PreQ1. Requires Zn(2+) as cofactor.

The catalysed reaction is 7-aminomethyl-7-carbaguanine + guanosine(34) in tRNA = 7-aminomethyl-7-carbaguanosine(34) in tRNA + guanine. Its pathway is tRNA modification; tRNA-queuosine biosynthesis. Functionally, catalyzes the base-exchange of a guanine (G) residue with the queuine precursor 7-aminomethyl-7-deazaguanine (PreQ1) at position 34 (anticodon wobble position) in tRNAs with GU(N) anticodons (tRNA-Asp, -Asn, -His and -Tyr). Catalysis occurs through a double-displacement mechanism. The nucleophile active site attacks the C1' of nucleotide 34 to detach the guanine base from the RNA, forming a covalent enzyme-RNA intermediate. The proton acceptor active site deprotonates the incoming PreQ1, allowing a nucleophilic attack on the C1' of the ribose to form the product. After dissociation, two additional enzymatic reactions on the tRNA convert PreQ1 to queuine (Q), resulting in the hypermodified nucleoside queuosine (7-(((4,5-cis-dihydroxy-2-cyclopenten-1-yl)amino)methyl)-7-deazaguanosine). The polypeptide is Queuine tRNA-ribosyltransferase (Campylobacter jejuni subsp. jejuni serotype O:6 (strain 81116 / NCTC 11828)).